The following is a 1462-amino-acid chain: DNA polymerase III PolC-type (1462 aa).

Residues 424-580 (YVVFDVETTG…YDAEATGRLL (157 aa)) form the Exonuclease domain.

It belongs to the DNA polymerase type-C family. PolC subfamily.

It localises to the cytoplasm. It carries out the reaction DNA(n) + a 2'-deoxyribonucleoside 5'-triphosphate = DNA(n+1) + diphosphate. In terms of biological role, required for replicative DNA synthesis. This DNA polymerase also exhibits 3' to 5' exonuclease activity. The protein is DNA polymerase III PolC-type of Streptococcus sanguinis (strain SK36).